The following is a 224-amino-acid chain: GTP cyclohydrolase 1 (224 aa).

The segment at Met-1–Arg-20 is disordered. The Zn(2+) site is built by Cys-114, His-117, and Cys-185.

Belongs to the GTP cyclohydrolase I family. In terms of assembly, toroid-shaped homodecamer, composed of two pentamers of five dimers.

It carries out the reaction GTP + H2O = 7,8-dihydroneopterin 3'-triphosphate + formate + H(+). Its pathway is cofactor biosynthesis; 7,8-dihydroneopterin triphosphate biosynthesis; 7,8-dihydroneopterin triphosphate from GTP: step 1/1. The sequence is that of GTP cyclohydrolase 1 from Chlorobaculum tepidum (strain ATCC 49652 / DSM 12025 / NBRC 103806 / TLS) (Chlorobium tepidum).